The following is a 315-amino-acid chain: tRNA dimethylallyltransferase (315 aa).

Position 10-17 (Gly10–Thr17) interacts with ATP. A substrate-binding site is contributed by Thr12–Thr17. The tract at residues Asp35–Gln38 is interaction with substrate tRNA.

It belongs to the IPP transferase family. As to quaternary structure, monomer. Requires Mg(2+) as cofactor.

It catalyses the reaction adenosine(37) in tRNA + dimethylallyl diphosphate = N(6)-dimethylallyladenosine(37) in tRNA + diphosphate. Its function is as follows. Catalyzes the transfer of a dimethylallyl group onto the adenine at position 37 in tRNAs that read codons beginning with uridine, leading to the formation of N6-(dimethylallyl)adenosine (i(6)A). The sequence is that of tRNA dimethylallyltransferase from Thermodesulfovibrio yellowstonii (strain ATCC 51303 / DSM 11347 / YP87).